Here is a 1019-residue protein sequence, read N- to C-terminus: Exportin-T (1019 aa).

This sequence belongs to the exportin family.

It is found in the nucleus. The protein localises to the cytoplasm. TRNA nucleus export receptor which facilitates tRNA translocation across the nuclear pore complex. Involved in pre-tRNA splicing, probably by affecting the interaction of pre-tRNA with splicing endonuclease. In Chaetomium globosum (strain ATCC 6205 / CBS 148.51 / DSM 1962 / NBRC 6347 / NRRL 1970) (Soil fungus), this protein is Exportin-T (LOS1).